Consider the following 223-residue polypeptide: Neurotrophic factor BDNF precursor form (223 aa).

The signal sequence occupies residues 1–5 (SCMKA). Residues 6 to 114 (APMKEVSIRG…AANMSMRVRR (109 aa)) constitute a propeptide that is removed on maturation. Asparagine 107 carries an N-linked (GlcNAc...) asparagine glycan. Cystine bridges form between cysteine 127–cysteine 194 and cysteine 172–cysteine 223.

It belongs to the NGF-beta family.

The protein localises to the secreted. Its function is as follows. Promotes the survival of neuronal populations that are all located either in the central nervous system or directly connected to it. The sequence is that of Neurotrophic factor BDNF precursor form (BDNF) from Eryx colubrinus colubrinus.